The sequence spans 133 residues: Small ribosomal subunit protein uS8 (133 aa).

The protein belongs to the universal ribosomal protein uS8 family. In terms of assembly, part of the 30S ribosomal subunit. Contacts proteins S5 and S12.

In terms of biological role, one of the primary rRNA binding proteins, it binds directly to 16S rRNA central domain where it helps coordinate assembly of the platform of the 30S subunit. This chain is Small ribosomal subunit protein uS8, found in Micrococcus luteus (Micrococcus lysodeikticus).